Here is a 144-residue protein sequence, read N- to C-terminus: Grifin (144 aa).

The 129-residue stretch at 5–133 (SKAFCAGGLA…DHCLAQVELA (129 aa)) folds into the Galectin domain. Ser-138 carries the phosphoserine modification.

Homodimer. As to expression, not detected in lens.

The protein is Grifin (GRIFIN) of Homo sapiens (Human).